Reading from the N-terminus, the 23-residue chain is Septenin 2d (23 aa).

In terms of tissue distribution, expressed in skin glands.

The protein resides in the secreted. Functionally, may act as an antimicrobial peptide. In Osteopilus septentrionalis (Cuban treefrog), this protein is Septenin 2d.